The primary structure comprises 205 residues: GTP cyclohydrolase-2 (205 aa).

Residue 49 to 53 (RVHSE) participates in GTP binding. Positions 54, 65, and 67 each coordinate Zn(2+). Residues Gln-70, 92–94 (EGR), and Thr-114 contribute to the GTP site. Residue Asp-126 is the Proton acceptor of the active site. The Nucleophile role is filled by Arg-128. Residues Thr-149 and Lys-154 each contribute to the GTP site.

Belongs to the GTP cyclohydrolase II family. Requires Zn(2+) as cofactor.

The enzyme catalyses GTP + 4 H2O = 2,5-diamino-6-hydroxy-4-(5-phosphoribosylamino)-pyrimidine + formate + 2 phosphate + 3 H(+). The protein operates within cofactor biosynthesis; riboflavin biosynthesis; 5-amino-6-(D-ribitylamino)uracil from GTP: step 1/4. In terms of biological role, catalyzes the conversion of GTP to 2,5-diamino-6-ribosylamino-4(3H)-pyrimidinone 5'-phosphate (DARP), formate and pyrophosphate. The polypeptide is GTP cyclohydrolase-2 (Pseudomonas syringae pv. tomato (strain ATCC BAA-871 / DC3000)).